We begin with the raw amino-acid sequence, 215 residues long: Pyridoxine/pyridoxamine 5'-phosphate oxidase (215 aa).

Substrate is bound by residues 8 to 11 (RQEY) and lysine 66. Residues 61–66 (RIVLLK), 76–77 (YT), arginine 82, lysine 83, and glutamine 105 each bind FMN. Substrate is bound by residues tyrosine 123 and arginine 127. Residues 140–141 (QS) and tryptophan 186 contribute to the FMN site. Position 192-194 (192-194 (RLH)) interacts with substrate. An FMN-binding site is contributed by arginine 196.

It belongs to the pyridoxamine 5'-phosphate oxidase family. As to quaternary structure, homodimer. FMN serves as cofactor.

The catalysed reaction is pyridoxamine 5'-phosphate + O2 + H2O = pyridoxal 5'-phosphate + H2O2 + NH4(+). It catalyses the reaction pyridoxine 5'-phosphate + O2 = pyridoxal 5'-phosphate + H2O2. Its pathway is cofactor metabolism; pyridoxal 5'-phosphate salvage; pyridoxal 5'-phosphate from pyridoxamine 5'-phosphate: step 1/1. It functions in the pathway cofactor metabolism; pyridoxal 5'-phosphate salvage; pyridoxal 5'-phosphate from pyridoxine 5'-phosphate: step 1/1. Functionally, catalyzes the oxidation of either pyridoxine 5'-phosphate (PNP) or pyridoxamine 5'-phosphate (PMP) into pyridoxal 5'-phosphate (PLP). This chain is Pyridoxine/pyridoxamine 5'-phosphate oxidase, found in Salinibacter ruber (strain DSM 13855 / M31).